The following is an 890-amino-acid chain: DNA mismatch repair protein MutS (890 aa).

607-614 (GPNMSGKS) serves as a coordination point for ATP.

The protein belongs to the DNA mismatch repair MutS family.

Functionally, this protein is involved in the repair of mismatches in DNA. It is possible that it carries out the mismatch recognition step. This protein has a weak ATPase activity. The sequence is that of DNA mismatch repair protein MutS from Bacillus mycoides (strain KBAB4) (Bacillus weihenstephanensis).